We begin with the raw amino-acid sequence, 63 residues long: Conotoxin PnMRCL-0111 (63 aa).

Positions 1-22 (MHCLSVFVILLLLTASAPSVDA) are cleaved as a signal peptide. Residues 23–50 (QPKTEDDVPLSSFHDDLQRTVRTLLDIR) constitute a propeptide that is removed on maturation. At W62 the chain carries Tryptophan amide.

This sequence belongs to the conotoxin T superfamily. In terms of processing, contains 2 disulfide bonds that can be either 'C1-C3, C2-C4' or 'C1-C4, C2-C3', since these disulfide connectivities have been observed for conotoxins with cysteine framework V (for examples, see AC P0DQQ7 and AC P81755). As to expression, expressed by the venom duct.

The protein localises to the secreted. The protein is Conotoxin PnMRCL-0111 of Conus pennaceus (Feathered cone).